The primary structure comprises 1446 residues: Bud site selection protein 4 (1446 aa).

Disordered stretches follow at residues 69–103, 358–385, 425–446, 495–525, 823–844, and 1025–1044; these read NQWNKVDDPQDLLPMENNYDDDEEQGDESDTTNLL, VSEEESKGVISSVPENENLPAVKSNPSS, DNNISKSANDGSVEDVADSGKE, ASEDSFNGSHDQNSSLNNLTKNDNGIQQNLE, SSSLKANNQDDNESCSSGSQAF, and KKNTQKDLKDGTTAEKRVSS. Residues 86–98 show a composition bias toward acidic residues; it reads NYDDDEEQGDESD. 2 stretches are compositionally biased toward polar residues: residues 425-434 and 495-524; these read DNNISKSAND and ASEDSFNGSHDQNSSLNNLTKNDNGIQQNL. Residues 1028–1044 show a composition bias toward basic and acidic residues; the sequence is TQKDLKDGTTAEKRVSS. A PH domain is found at 1314–1425; the sequence is DITKEGYLLQ…WYMKLKEVVE (112 aa).

The protein belongs to the BUD4 family.

Its subcellular location is the bud neck. In terms of biological role, required for selection of future bud sites. Cooperates with other bud site selection proteins to recognize a spatial landmark during mitosis and they subsequently become a landmark for downstream polarity establishment factors that coordinate budding and cytokinesis. Involved in the septin organization at the bud neck. This is Bud site selection protein 4 (BUD4) from Candida glabrata (strain ATCC 2001 / BCRC 20586 / JCM 3761 / NBRC 0622 / NRRL Y-65 / CBS 138) (Yeast).